A 323-amino-acid chain; its full sequence is Coiled-coil domain-containing protein 160 (323 aa).

The disordered stretch occupies residues 1-81; the sequence is MDARRKHWKD…EGEQDSNLRE (81 aa). Residues 48 to 58 are compositionally biased toward polar residues; it reads SNFSVRNTQEG. A coiled-coil region spans residues 144 to 289; sequence LRLHLLNEEL…IKNELRVEKT (146 aa).

This sequence belongs to the CCDC160 family.

The sequence is that of Coiled-coil domain-containing protein 160 (Ccdc160) from Mus musculus (Mouse).